A 300-amino-acid chain; its full sequence is Estradiol 17-beta-dehydrogenase 11 (300 aa).

Positions 1 to 18 (MKILLDLLLLLPLLIVCC) are cleaved as a signal peptide. Position 40-67 (40-67 (LITGAGHGIGRLTAYEFAKLKSKLVLWD)) interacts with NADP(+). S172 serves as a coordination point for substrate. The Proton acceptor role is filled by Y185. K189 is a binding site for NADP(+).

It belongs to the short-chain dehydrogenases/reductases (SDR) family. 17-beta-HSD 3 subfamily.

It localises to the endoplasmic reticulum. It is found in the lipid droplet. It catalyses the reaction 17beta-estradiol + NAD(+) = estrone + NADH + H(+). It carries out the reaction 17beta-estradiol + NADP(+) = estrone + NADPH + H(+). Its function is as follows. Can convert androstan-3-alpha,17-beta-diol (3-alpha-diol) to androsterone in vitro, suggesting that it may participate in androgen metabolism during steroidogenesis. May act by metabolizing compounds that stimulate steroid synthesis and/or by generating metabolites that inhibit it. Has no activity toward DHEA (dehydroepiandrosterone), or A-dione (4-androste-3,17-dione), and only a slight activity toward testosterone to A-dione. In Macaca fascicularis (Crab-eating macaque), this protein is Estradiol 17-beta-dehydrogenase 11 (HSD17B11).